Consider the following 2046-residue polypeptide: Protein TIC 214 (2046 aa).

The next 6 membrane-spanning stretches (helical) occupy residues 18–38 (VSGPIILFGLYYGFIATLPFG), 54–74 (LYGIIAISGSITGQLIVFLSM), 79–99 (IYAALWKPHAITLLVIPYTFC), 125–145 (ILSLFMGGLILQLLNPILLAN), 163–183 (ISFMISSFCGWLGGHILFINL), and 214–234 (TFSVLLISYFSFYLGRSPLIF). 3 disordered regions span residues 278 to 299 (DEDRSVAMAKKGRSVAEDEDRS), 320 to 472 (ARSV…VPRE), and 1833 to 1898 (AKDS…EDEI). Basic and acidic residues-rich tracts occupy residues 322–335 (SVAEDKDPEDEHRS), 344–368 (SVAEDKDPEDEHRSVAMAKKDRSVA), and 378–457 (AKKD…RSVA). Low complexity predominate over residues 1833–1866 (AKDSNANDINAKDSNANDINANDSNAKDSNANDI). Basic and acidic residues predominate over residues 1882–1898 (NAKDSNADVPKKKEDEI).

This sequence belongs to the TIC214 family. As to quaternary structure, part of the Tic complex.

It is found in the plastid. Its subcellular location is the chloroplast inner membrane. Functionally, involved in protein precursor import into chloroplasts. May be part of an intermediate translocation complex acting as a protein-conducting channel at the inner envelope. This Pinus koraiensis (Korean pine) protein is Protein TIC 214.